The sequence spans 70 residues: Small ribosomal subunit protein bS21B (70 aa).

The protein belongs to the bacterial ribosomal protein bS21 family.

In Cupriavidus metallidurans (strain ATCC 43123 / DSM 2839 / NBRC 102507 / CH34) (Ralstonia metallidurans), this protein is Small ribosomal subunit protein bS21B.